Consider the following 833-residue polypeptide: Scavenger receptor class F member 2 (833 aa).

The first 33 residues, 1–33, serve as a signal peptide directing secretion; it reads MEGAGSRGAGPARRQGARGLGLLLLLWLLPGLA. Topologically, residues 34-433 are extracellular; the sequence is APQDLNPRGR…ACHLETNQRK (400 aa). EGF-like domains follow at residues 63–102, 114–145, 140–174, 175–204, 205–233, and 228–262; these read LGDE…ANCD, CKER…ARCE, WGAR…AQCA, SACY…RSCN, NQCA…ARCD, and FGAR…KYCR. 18 disulfide bridges follow: Cys-67–Cys-78, Cys-72–Cys-90, Cys-92–Cys-101, Cys-118–Cys-126, Cys-120–Cys-133, Cys-135–Cys-144, Cys-148–Cys-155, Cys-150–Cys-162, Cys-164–Cys-173, Cys-177–Cys-185, Cys-179–Cys-192, Cys-194–Cys-203, Cys-207–Cys-214, Cys-209–Cys-221, Cys-223–Cys-232, Cys-236–Cys-243, Cys-238–Cys-250, and Cys-252–Cys-261. Residue Asn-75 is glycosylated (N-linked (GlcNAc...) asparagine). Asn-302 and Asn-357 each carry an N-linked (GlcNAc...) asparagine glycan. The EGF-like 7 domain occupies 364 to 395; sequence CAFVCSDCGSGHCDFQSGRCLCSPGVHGPHCN. 3 disulfides stabilise this stretch: Cys-368–Cys-376, Cys-371–Cys-383, and Cys-385–Cys-394. An N-linked (GlcNAc...) asparagine glycan is attached at Asn-395. Residues 434–454 traverse the membrane as a helical segment; sequence GVMGAGALLTLLLGLLLSLLG. Over 455 to 833 the chain is Cytoplasmic; that stretch reads CCCACRGKDS…SRAGTAPGAS (379 aa). Phosphoserine occurs at positions 538 and 600. The segment at 578 to 833 is disordered; sequence SLEPTGTSTP…SRAGTAPGAS (256 aa). Tyr-615 carries the post-translational modification Phosphotyrosine. A compositionally biased stretch (basic and acidic residues) spans 619–630; that stretch reads ARREARPARTRN. Phosphoserine occurs at positions 638, 640, and 695. Thr-712 is subject to Phosphothreonine. A compositionally biased stretch (basic and acidic residues) spans 748–761; sequence ELRDKTRSLGRAEK. Low complexity predominate over residues 781–798; that stretch reads ASASEASGSEKAAASAPA. Basic residues predominate over residues 804-816; the sequence is KKTPIQKPPRKKS.

Homophilic and heterophilic interaction via its extracellular domain. Interacts with SCARF1. The heterophilic interaction with SCARF1, which is stronger than the homophilic interaction with itself, is suppressed by the presence of SCARF1 ligand such as Ac-LDL.

The protein localises to the membrane. Functionally, probable adhesion protein, which mediates homophilic and heterophilic interactions. In contrast to SCARF1, it poorly mediates the binding and degradation of acetylated low density lipoprotein (Ac-LDL). This Mus musculus (Mouse) protein is Scavenger receptor class F member 2 (Scarf2).